Reading from the N-terminus, the 178-residue chain is ATP-dependent protease subunit HslV (178 aa).

Residue T8 is part of the active site. The Na(+) site is built by G163, C166, and T169.

Belongs to the peptidase T1B family. HslV subfamily. As to quaternary structure, a double ring-shaped homohexamer of HslV is capped on each side by a ring-shaped HslU homohexamer. The assembly of the HslU/HslV complex is dependent on binding of ATP.

It is found in the cytoplasm. It carries out the reaction ATP-dependent cleavage of peptide bonds with broad specificity.. Allosterically activated by HslU binding. Functionally, protease subunit of a proteasome-like degradation complex believed to be a general protein degrading machinery. The polypeptide is ATP-dependent protease subunit HslV (Treponema denticola (strain ATCC 35405 / DSM 14222 / CIP 103919 / JCM 8153 / KCTC 15104)).